Consider the following 262-residue polypeptide: Small ribosomal subunit protein eS4 (262 aa).

One can recognise an S4 RNA-binding domain in the interval 42 to 104; that stretch reads LPLLIFLRNR…TGEFFRLIYD (63 aa).

Belongs to the eukaryotic ribosomal protein eS4 family.

The chain is Small ribosomal subunit protein eS4 (RpS4) from Lysiphlebus testaceipes (Greenbugs aphid parastoid).